Consider the following 491-residue polypeptide: Ketol-acid reductoisomerase (NADP(+)) (491 aa).

The KARI N-terminal Rossmann domain occupies 15 to 208 (AQLGKCRFMG…GGHRAGVLES (194 aa)). NADP(+)-binding positions include 45–48 (CGAQ), Arg-68, Arg-76, Ser-78, and 108–110 (DKQ). Residue His-132 is part of the active site. Gly-158 is an NADP(+) binding site. 2 KARI C-terminal knotted domains span residues 209 to 344 (SFVA…TAPQ) and 345 to 484 (FEGK…MTDM). The Mg(2+) site is built by Asp-217, Glu-221, Glu-389, and Glu-393. Ser-414 contacts substrate.

This sequence belongs to the ketol-acid reductoisomerase family. Mg(2+) is required as a cofactor.

The catalysed reaction is (2R)-2,3-dihydroxy-3-methylbutanoate + NADP(+) = (2S)-2-acetolactate + NADPH + H(+). It carries out the reaction (2R,3R)-2,3-dihydroxy-3-methylpentanoate + NADP(+) = (S)-2-ethyl-2-hydroxy-3-oxobutanoate + NADPH + H(+). It functions in the pathway amino-acid biosynthesis; L-isoleucine biosynthesis; L-isoleucine from 2-oxobutanoate: step 2/4. It participates in amino-acid biosynthesis; L-valine biosynthesis; L-valine from pyruvate: step 2/4. In terms of biological role, involved in the biosynthesis of branched-chain amino acids (BCAA). Catalyzes an alkyl-migration followed by a ketol-acid reduction of (S)-2-acetolactate (S2AL) to yield (R)-2,3-dihydroxy-isovalerate. In the isomerase reaction, S2AL is rearranged via a Mg-dependent methyl migration to produce 3-hydroxy-3-methyl-2-ketobutyrate (HMKB). In the reductase reaction, this 2-ketoacid undergoes a metal-dependent reduction by NADPH to yield (R)-2,3-dihydroxy-isovalerate. The protein is Ketol-acid reductoisomerase (NADP(+)) of Salmonella agona (strain SL483).